Consider the following 530-residue polypeptide: MTDAMFSSSAKPHFIKPMLPGFETYIVIPKAFYSNYLEGRQEGNAAELRSDATEITWKIKIDGRRMTKGWEEFAVAHNLQVDDILVFRHEGNLLFHVTPFGLSFCEILYSQRDEKDVKDTTGKVTRSRTVKKNGKNECSSVDTDFVVPVTASNQRVDSFYLPRGFTTSSGSSKLCNEIILIDEKDRPSTLKLRYNKSSNRFCVSRGWRAFCCRNGYRTGCFLRIILVRKGKTPVLRIFPLERDEDNIEKHSKKVKQEVEHEESVKEETNVESGKLKRDRLLQKDPKNLCSTSQDTNFVVPVTASNQRHDSFHLPKGLTTSSGLSKLCKKIIFMDQKGRSSILDLSYSISDDRFTVRRGWKAFCCRNEHKTGCFLRLILVQNGKTPVLRIFPLERYENSIAKNSKKIKQEVEYESAKEEKNLESLSLSDNSSFVVSVTVSNLSEDILHLPIRLSRSNLLDKKIHEIVLMNKEGRTWILSLKYSKYSGRFRITRGWKSFCEANGQKPGCTFLLKLHLSMTRFDQDGVAWDKK.

2 DNA-binding regions (TF-B3) span residues 11–103 (KPHF…FGLS) and 144–241 (DFVV…FPLE). The disordered stretch occupies residues 251–276 (SKKVKQEVEHEESVKEETNVESGKLK). A compositionally biased stretch (basic and acidic residues) spans 254–276 (VKQEVEHEESVKEETNVESGKLK). 2 consecutive DNA-binding regions (TF-B3) follow at residues 296 to 393 (NFVV…FPLE) and 431 to 530 (SFVV…WDKK).

The protein resides in the nucleus. In Arabidopsis thaliana (Mouse-ear cress), this protein is B3 domain-containing protein REM-like 3.